Consider the following 344-residue polypeptide: Phenylalanine--tRNA ligase alpha subunit (344 aa).

E259 provides a ligand contact to Mg(2+).

The protein belongs to the class-II aminoacyl-tRNA synthetase family. Phe-tRNA synthetase alpha subunit type 1 subfamily. As to quaternary structure, tetramer of two alpha and two beta subunits. Mg(2+) serves as cofactor.

The protein resides in the cytoplasm. The catalysed reaction is tRNA(Phe) + L-phenylalanine + ATP = L-phenylalanyl-tRNA(Phe) + AMP + diphosphate + H(+). This chain is Phenylalanine--tRNA ligase alpha subunit, found in Nitrosospira multiformis (strain ATCC 25196 / NCIMB 11849 / C 71).